The following is a 528-amino-acid chain: 2-isopropylmalate synthase (528 aa).

The region spanning 12 to 279 (IRIFDTTLRD…DSSINTPRIV (268 aa)) is the Pyruvate carboxyltransferase domain. Mn(2+) is bound by residues Asp21, His214, His216, and Asn250. Residues 401-528 (RLASMTISDV…STDVPTPATA (128 aa)) are regulatory domain.

It belongs to the alpha-IPM synthase/homocitrate synthase family. LeuA type 1 subfamily. As to quaternary structure, homodimer. The cofactor is Mn(2+).

Its subcellular location is the cytoplasm. It carries out the reaction 3-methyl-2-oxobutanoate + acetyl-CoA + H2O = (2S)-2-isopropylmalate + CoA + H(+). Its pathway is amino-acid biosynthesis; L-leucine biosynthesis; L-leucine from 3-methyl-2-oxobutanoate: step 1/4. Catalyzes the condensation of the acetyl group of acetyl-CoA with 3-methyl-2-oxobutanoate (2-ketoisovalerate) to form 3-carboxy-3-hydroxy-4-methylpentanoate (2-isopropylmalate). The sequence is that of 2-isopropylmalate synthase from Stenotrophomonas maltophilia (strain K279a).